A 382-amino-acid chain; its full sequence is Succinyl-diaminopimelate desuccinylase (382 aa).

Position 71 (H71) interacts with Zn(2+). The active site involves D73. D105 is a binding site for Zn(2+). The Proton acceptor role is filled by E139. Zn(2+)-binding residues include E140, E168, and H354.

The protein belongs to the peptidase M20A family. DapE subfamily. Homodimer. Zn(2+) is required as a cofactor. The cofactor is Co(2+).

It carries out the reaction N-succinyl-(2S,6S)-2,6-diaminopimelate + H2O = (2S,6S)-2,6-diaminopimelate + succinate. It functions in the pathway amino-acid biosynthesis; L-lysine biosynthesis via DAP pathway; LL-2,6-diaminopimelate from (S)-tetrahydrodipicolinate (succinylase route): step 3/3. Its function is as follows. Catalyzes the hydrolysis of N-succinyl-L,L-diaminopimelic acid (SDAP), forming succinate and LL-2,6-diaminopimelate (DAP), an intermediate involved in the bacterial biosynthesis of lysine and meso-diaminopimelic acid, an essential component of bacterial cell walls. The chain is Succinyl-diaminopimelate desuccinylase from Stutzerimonas stutzeri (strain A1501) (Pseudomonas stutzeri).